Here is a 428-residue protein sequence, read N- to C-terminus: Enolase (428 aa).

Q163 contributes to the (2R)-2-phosphoglycerate binding site. Catalysis depends on E205, which acts as the Proton donor. Mg(2+)-binding residues include D242, E286, and D313. (2R)-2-phosphoglycerate contacts are provided by K338, R367, S368, and K389. The Proton acceptor role is filled by K338.

This sequence belongs to the enolase family. Mg(2+) serves as cofactor.

The protein resides in the cytoplasm. It localises to the secreted. Its subcellular location is the cell surface. It catalyses the reaction (2R)-2-phosphoglycerate = phosphoenolpyruvate + H2O. It participates in carbohydrate degradation; glycolysis; pyruvate from D-glyceraldehyde 3-phosphate: step 4/5. Its function is as follows. Catalyzes the reversible conversion of 2-phosphoglycerate (2-PG) into phosphoenolpyruvate (PEP). It is essential for the degradation of carbohydrates via glycolysis. The sequence is that of Enolase from Verminephrobacter eiseniae (strain EF01-2).